The following is a 369-amino-acid chain: Protein phosphatase 1 regulatory inhibitor subunit PPP1R8 homolog (369 aa).

A compositionally biased stretch (basic and acidic residues) spans 1 to 11 (MYGRSGLDRFK). The segment at 1-26 (MYGRSGLDRFKKSQTSEPFSVSANPP) is disordered. A compositionally biased stretch (polar residues) spans 13–23 (SQTSEPFSVSA). An FHA domain is found at 87–138 (HIFGRQHQTCDFVLDHQSVSRQHAAVVPHKNGSIFVIDLGSAHGTFVANERL). The segment at 345 to 369 (VSQPAAETECGGVGEEDDNDDLFGD) is disordered. Residues 358-369 (GEEDDNDDLFGD) show a composition bias toward acidic residues.

In terms of assembly, interacts with human protein phosphatase PPP1C.

Inhibitor of protein-phosphatase 1 (PP1). Binds to and inhibits PP1 activity. The polypeptide is Protein phosphatase 1 regulatory inhibitor subunit PPP1R8 homolog (Arabidopsis thaliana (Mouse-ear cress)).